The sequence spans 750 residues: Olfactomedin-like protein 2B (750 aa).

A signal peptide spans 1 to 22; sequence MAKPRLLVLYFALIVVPAWVSS. Coiled-coil stretches lie at residues 40–68 and 179–213; these read AEDE…KVKA and KLEE…GKEN. Asn-187 and Asn-213 each carry an N-linked (GlcNAc...) asparagine glycan. 2 disordered regions span residues 346-437 and 452-484; these read TRRP…PPAV and VPPT…PEEE. Composition is skewed to polar residues over residues 354-384 and 393-413; these read QGHS…SDPS and PTLQ…LQPS. The segment covering 416 to 430 has biased composition (low complexity); the sequence is VPATTVAHTATQQPA. An Olfactomedin-like domain is found at 493–750; sequence RCKDTLSTIT…QVTYHVIFAY (258 aa). A disulfide bond links Cys-494 and Cys-680. An N-linked (GlcNAc...) asparagine glycan is attached at Asn-695.

In terms of assembly, homodimer. Binds to heparin and chondroitin sulfate E. O-glycosylated and N-glycosylated.

The protein localises to the secreted. In Homo sapiens (Human), this protein is Olfactomedin-like protein 2B (OLFML2B).